Reading from the N-terminus, the 464-residue chain is 3-isopropylmalate dehydratase large subunit (464 aa).

Residues Cys337, Cys397, and Cys400 each contribute to the [4Fe-4S] cluster site.

This sequence belongs to the aconitase/IPM isomerase family. LeuC type 1 subfamily. In terms of assembly, heterodimer of LeuC and LeuD. [4Fe-4S] cluster is required as a cofactor.

The enzyme catalyses (2R,3S)-3-isopropylmalate = (2S)-2-isopropylmalate. The protein operates within amino-acid biosynthesis; L-leucine biosynthesis; L-leucine from 3-methyl-2-oxobutanoate: step 2/4. Functionally, catalyzes the isomerization between 2-isopropylmalate and 3-isopropylmalate, via the formation of 2-isopropylmaleate. The polypeptide is 3-isopropylmalate dehydratase large subunit (Bacillus thuringiensis (strain Al Hakam)).